Here is a 499-residue protein sequence, read N- to C-terminus: Potassium voltage-gated channel subfamily A member 2 (499 aa).

Residues 1–26 (MTVATEDPADEAAALPGHPQDTYDPE) form a disordered region. Residues 1–125 (MTVATEDPAD…YELGEEAMEM (125 aa)) are tetramerization domain. The Cytoplasmic segment spans residues 1 to 160 (MTVATEDPAD…LLFEYPESSG (160 aa)). Residues 161–182 (PARIIAIVSVMVILISIVSFCL) traverse the membrane as a helical segment. At 183–221 (ETLPIFRDENEDMHGSGMTFHTYSNSTAGYQQSTSFTDP) the chain is on the extracellular side. A glycan (N-linked (GlcNAc...) asparagine) is linked at asparagine 207. A helical membrane pass occupies residues 222–243 (FFIVETLCIIWFSFEFLVRFFA). A lipid anchor (S-palmitoyl cysteine) is attached at cysteine 244. Residues 244–254 (CPSKAGFFTNI) are Cytoplasmic-facing. A helical transmembrane segment spans residues 255–275 (MNIIDIVAIIPYFITLGTELA). Residues 276–289 (EKPEDAQQGQQAMS) lie on the Extracellular side of the membrane. Residues 290 to 310 (LAILRVIRLVRVFRIFKLSRH) form a helical; Voltage-sensor membrane-spanning segment. Residues 311 to 325 (SKGLQILGQTLKASM) are Cytoplasmic-facing. Positions 312 to 325 (KGLQILGQTLKASM) are S4-S5 linker. Residues 326–347 (RELGLLIFFLFIGVILFSSAVY) form a helical membrane-spanning segment. Over 348–361 (FAEADERDSQFPSI) the chain is Extracellular. Positions 362 to 373 (PDAFWWAVVSMT) form an intramembrane region, helical. The Selectivity filter motif lies at 374–379 (TVGYGD). The stretch at 374–381 (TVGYGDMV) is an intramembrane region. Topologically, residues 382–388 (PTTIGGK) are extracellular. The helical transmembrane segment at 389–417 (IVGSLCAIAGVLTIALPVPVIVSNFNYFY) threads the bilayer. At 418–499 (HRETEGEEQA…VNITKMLTDV (82 aa)) the chain is on the cytoplasmic side. Tyrosine 429 is modified (phosphotyrosine). Serine 434, serine 440, serine 441, and serine 449 each carry phosphoserine. At tyrosine 458 the chain carries Phosphotyrosine. Serine 468 is subject to Phosphoserine. Positions 497-499 (TDV) match the PDZ-binding motif.

The protein belongs to the potassium channel family. A (Shaker) (TC 1.A.1.2) subfamily. Kv1.2/KCNA2 sub-subfamily. As to quaternary structure, homotetramer and heterotetramer with other channel-forming alpha subunits, such as KCNA1, KCNA4, KCNA5, KCNA6 and KCNA7. Channel activity is regulated by interaction with the beta subunits, including KCNAB1 and KCNAB2. Identified in a complex with KCNA1 and KCNAB2. Identified in a complex with KCNA4 and FYN. Identified in a complex with KCNA5 and KCNAB1. Interacts with the beta subunit KCNAB1. Interacts with PTK2B. Interacts (via C-terminus) with CTTN. Interacts (via N-terminal cytoplasmic domain) with RHOA (GTP-bound form); this regulates channel activity by reducing location at the cell surface in response to CHRM1 activation. Interacts with DRD2. Interacts with SIGMAR1; cocaine consumption leads to increased interaction. Interacts with ADAM22. Interacts with CNTNAP2. Interacts (via C-terminus) with the PDZ domains of DLG1, DLG2 and DLG4. Interacts with ADAM11. Interacts with LYNX1. Post-translationally, phosphorylated on tyrosine residues; phosphorylation increases in response to ischemia. Phosphorylated on tyrosine residues by activated PTK2B/PYK2. Phosphorylation on tyrosine residues suppresses ion channel activity. Phosphorylated on tyrosine residues in response to CHRM1 activation; this abolishes interaction with CTTN. This is probably due to endocytosis of the phosphorylated channel subunits. Phosphorylated on serine residues in response to increased cAMP levels; phosphorylation is apparently not catalyzed by PKA. In terms of processing, N-glycosylated, with complex, sialylated N-glycans. Detected in portal vein myocytes (at protein level). Detected in portal vein. Brain, liver and kidney.

It is found in the cell membrane. Its subcellular location is the membrane. It localises to the cell projection. The protein localises to the axon. The protein resides in the synapse. It is found in the presynaptic cell membrane. Its subcellular location is the synaptosome. It localises to the endoplasmic reticulum membrane. The protein localises to the dendrite. The protein resides in the lamellipodium membrane. It is found in the cell junction. Its subcellular location is the paranodal septate junction. It catalyses the reaction K(+)(in) = K(+)(out). Inhibited by 4-aminopyridine (4-AP). Inhibited by dendrotoxin (DTX) and charybdotoxin (CTX), but not by tetraethylammonium (TEA). Inhibited by tityustoxin-K alpha (TsTX-Kalpha), a toxin that is highly specific for KCNA2. Inhibited by maurotoxin. Inhibited by kappaM conotoxins kappaM-RIIIJ and kappaM-RIIIK. Voltage-gated potassium channel that mediates transmembrane potassium transport in excitable membranes, primarily in the brain and the central nervous system, but also in the cardiovascular system. Prevents aberrant action potential firing and regulates neuronal output. Forms tetrameric potassium-selective channels through which potassium ions pass in accordance with their electrochemical gradient. The channel alternates between opened and closed conformations in response to the voltage difference across the membrane. Can form functional homotetrameric channels and heterotetrameric channels that contain variable proportions of KCNA1, KCNA2, KCNA4, KCNA5, KCNA6, KCNA7, and possibly other family members as well; channel properties depend on the type of alpha subunits that are part of the channel. Channel properties are modulated by cytoplasmic beta subunits that regulate the subcellular location of the alpha subunits and promote rapid inactivation of delayed rectifier potassium channels. In vivo, membranes probably contain a mixture of heteromeric potassium channel complexes, making it difficult to assign currents observed in intact tissues to any particular potassium channel family member. Homotetrameric KCNA2 forms a delayed-rectifier potassium channel that opens in response to membrane depolarization, followed by slow spontaneous channel closure. In contrast, a heteromultimer formed by KCNA2 and KCNA4 shows rapid inactivation. Regulates neuronal excitability and plays a role as pacemaker in the regulation of neuronal action potentials. KCNA2-containing channels play a presynaptic role and prevent hyperexcitability and aberrant action potential firing. Response to toxins that are selective for KCNA2-containing potassium channels suggests that in Purkinje cells, dendritic subthreshold KCNA2-containing potassium channels prevent random spontaneous calcium spikes, suppressing dendritic hyperexcitability without hindering the generation of somatic action potentials, and thereby play an important role in motor coordination. Plays a role in the induction of long-term potentiation of neuron excitability in the CA3 layer of the hippocampus. May function as down-stream effector for G protein-coupled receptors and inhibit GABAergic inputs to basolateral amygdala neurons. May contribute to the regulation of neurotransmitter release, such as gamma-aminobutyric acid (GABA). Contributes to the regulation of the axonal release of the neurotransmitter dopamine. Reduced KCNA2 expression plays a role in the perception of neuropathic pain after peripheral nerve injury, but not acute pain. Plays a role in the regulation of the time spent in non-rapid eye movement (NREM) sleep. This Oryctolagus cuniculus (Rabbit) protein is Potassium voltage-gated channel subfamily A member 2 (KCNA2).